Reading from the N-terminus, the 565-residue chain is Hemagglutinin-neuraminidase (565 aa).

The Intravirion segment spans residues M1–T19. A helical membrane pass occupies residues T20–I40. Residues T41–S565 lie on the Virion surface side of the membrane. N139 is a glycosylation site (N-linked (GlcNAc...) asparagine; by host). Disulfide bonds link C161/C185, C175/C236, and C227/C240. The segment at N223–S228 is involved in neuraminidase activity. N-linked (GlcNAc...) asparagine; by host glycosylation occurs at N267. Intrachain disulfides connect C333–C454, C365–C375, and C448–C458. Residue N504 is glycosylated (N-linked (GlcNAc...) asparagine; by host). C528 and C539 are joined by a disulfide.

The protein belongs to the paramyxoviruses hemagglutinin-neuraminidase family. Homotetramer; composed of disulfide-linked homodimers. Interacts with F protein trimer.

It localises to the virion membrane. It is found in the host cell membrane. The enzyme catalyses Hydrolysis of alpha-(2-&gt;3)-, alpha-(2-&gt;6)-, alpha-(2-&gt;8)- glycosidic linkages of terminal sialic acid residues in oligosaccharides, glycoproteins, glycolipids, colominic acid and synthetic substrates.. In terms of biological role, attaches the virus to sialic acid-containing cell receptors and thereby initiating infection. Binding of HN protein to the receptor induces a conformational change that allows the F protein to trigger virion/cell membranes fusion. Functionally, neuraminidase activity ensures the efficient spread of the virus by dissociating the mature virions from the neuraminic acid containing glycoproteins. The protein is Hemagglutinin-neuraminidase (HN) of Canis lupus familiaris (Dog).